A 323-amino-acid chain; its full sequence is Beta-ketoacyl-[acyl-carrier-protein] synthase III (323 aa).

Active-site residues include C114 and H250. The interval 251–255 (QANIR) is ACP-binding. Residue N280 is part of the active site.

It belongs to the thiolase-like superfamily. FabH family. Homodimer.

It is found in the cytoplasm. It catalyses the reaction malonyl-[ACP] + acetyl-CoA + H(+) = 3-oxobutanoyl-[ACP] + CO2 + CoA. The protein operates within lipid metabolism; fatty acid biosynthesis. Functionally, catalyzes the condensation reaction of fatty acid synthesis by the addition to an acyl acceptor of two carbons from malonyl-ACP. Catalyzes the first condensation reaction which initiates fatty acid synthesis and may therefore play a role in governing the total rate of fatty acid production. Possesses both acetoacetyl-ACP synthase and acetyl transacylase activities. Its substrate specificity determines the biosynthesis of branched-chain and/or straight-chain of fatty acids. The polypeptide is Beta-ketoacyl-[acyl-carrier-protein] synthase III (Ruegeria pomeroyi (strain ATCC 700808 / DSM 15171 / DSS-3) (Silicibacter pomeroyi)).